A 163-amino-acid chain; its full sequence is Probable ribosome biogenesis protein RLP24 (163 aa).

It belongs to the eukaryotic ribosomal protein eL24 family. As to quaternary structure, associated with nucleolar and cytoplasmic pre-60S particles. At the end of biogenesis it dissociates from cytoplasmic pre-60S particles and is likely to be exchanged for its ribosomal homolog, RPL24.

It is found in the nucleus. The protein resides in the nucleolus. Involved in the biogenesis of the 60S ribosomal subunit. Ensures the docking of GTPBP4/NOG1 to pre-60S particles. This Bos taurus (Bovine) protein is Probable ribosome biogenesis protein RLP24 (RSL24D1).